We begin with the raw amino-acid sequence, 182 residues long: GTP cyclohydrolase 1 (182 aa).

Positions 73, 76, and 144 each coordinate Zn(2+).

This sequence belongs to the GTP cyclohydrolase I family. In terms of assembly, homomer.

The enzyme catalyses GTP + H2O = 7,8-dihydroneopterin 3'-triphosphate + formate + H(+). Its pathway is cofactor biosynthesis; 7,8-dihydroneopterin triphosphate biosynthesis; 7,8-dihydroneopterin triphosphate from GTP: step 1/1. The protein is GTP cyclohydrolase 1 of Hydrogenobaculum sp. (strain Y04AAS1).